The chain runs to 75 residues: Putative sulfur carrier protein YrkI (75 aa).

Cys-14 functions as the Cysteine persulfide intermediate in the catalytic mechanism.

Belongs to the sulfur carrier protein TusA family.

This chain is Putative sulfur carrier protein YrkI (yrkI), found in Bacillus subtilis (strain 168).